A 96-amino-acid chain; its full sequence is Co-chaperonin GroES (96 aa).

The protein belongs to the GroES chaperonin family. In terms of assembly, heptamer of 7 subunits arranged in a ring. Interacts with the chaperonin GroEL.

The protein localises to the cytoplasm. In terms of biological role, together with the chaperonin GroEL, plays an essential role in assisting protein folding. The GroEL-GroES system forms a nano-cage that allows encapsulation of the non-native substrate proteins and provides a physical environment optimized to promote and accelerate protein folding. GroES binds to the apical surface of the GroEL ring, thereby capping the opening of the GroEL channel. This chain is Co-chaperonin GroES, found in Shewanella denitrificans (strain OS217 / ATCC BAA-1090 / DSM 15013).